The chain runs to 222 residues: uncharacterized protein (222 aa).

The first 20 residues, 1-20 (MRTTSFAKVAALCGLLALSG), serve as a signal peptide directing secretion. Residue C21 is the site of N-palmitoyl cysteine attachment. C21 carries the S-diacylglycerol cysteine lipid modification.

The protein resides in the cell membrane. This is an uncharacterized protein from Escherichia coli O157:H7.